Here is a 299-residue protein sequence, read N- to C-terminus: Urease accessory protein UreD (299 aa).

The protein belongs to the UreD family. UreD, UreF and UreG form a complex that acts as a GTP-hydrolysis-dependent molecular chaperone, activating the urease apoprotein by helping to assemble the nickel containing metallocenter of UreC. The UreE protein probably delivers the nickel.

Its subcellular location is the cytoplasm. In terms of biological role, required for maturation of urease via the functional incorporation of the urease nickel metallocenter. In Natronomonas pharaonis (strain ATCC 35678 / DSM 2160 / CIP 103997 / JCM 8858 / NBRC 14720 / NCIMB 2260 / Gabara) (Halobacterium pharaonis), this protein is Urease accessory protein UreD.